We begin with the raw amino-acid sequence, 360 residues long: Phospho-N-acetylmuramoyl-pentapeptide-transferase (360 aa).

The next 10 helical transmembrane spans lie at Y21–G41, M74–G94, Y97–Y117, I135–V155, I168–S188, G199–S219, A236–F256, V263–L283, I288–V308, and V338–K358.

It belongs to the glycosyltransferase 4 family. MraY subfamily. Mg(2+) serves as cofactor.

Its subcellular location is the cell inner membrane. The enzyme catalyses UDP-N-acetyl-alpha-D-muramoyl-L-alanyl-gamma-D-glutamyl-meso-2,6-diaminopimeloyl-D-alanyl-D-alanine + di-trans,octa-cis-undecaprenyl phosphate = di-trans,octa-cis-undecaprenyl diphospho-N-acetyl-alpha-D-muramoyl-L-alanyl-D-glutamyl-meso-2,6-diaminopimeloyl-D-alanyl-D-alanine + UMP. The protein operates within cell wall biogenesis; peptidoglycan biosynthesis. Catalyzes the initial step of the lipid cycle reactions in the biosynthesis of the cell wall peptidoglycan: transfers peptidoglycan precursor phospho-MurNAc-pentapeptide from UDP-MurNAc-pentapeptide onto the lipid carrier undecaprenyl phosphate, yielding undecaprenyl-pyrophosphoryl-MurNAc-pentapeptide, known as lipid I. In Shewanella violacea (strain JCM 10179 / CIP 106290 / LMG 19151 / DSS12), this protein is Phospho-N-acetylmuramoyl-pentapeptide-transferase.